Reading from the N-terminus, the 82-residue chain is Cytochrome b559 subunit alpha (82 aa).

The helical transmembrane segment at 22–36 threads the bilayer; it reads VIHAVTLPSIFLAGF. Histidine 24 serves as a coordination point for heme.

The protein belongs to the PsbE/PsbF family. Heterodimer of an alpha subunit and a beta subunit. PSII is composed of 1 copy each of membrane proteins PsbA, PsbB, PsbC, PsbD, PsbE, PsbF, PsbH, PsbI, PsbJ, PsbK, PsbL, PsbM, PsbT, PsbX, PsbY, PsbZ, Psb30/Ycf12, peripheral proteins PsbO, CyanoQ (PsbQ), PsbU, PsbV and a large number of cofactors. It forms dimeric complexes. The cofactor is heme b.

The protein resides in the cellular thylakoid membrane. In terms of biological role, this b-type cytochrome is tightly associated with the reaction center of photosystem II (PSII). PSII is a light-driven water:plastoquinone oxidoreductase that uses light energy to abstract electrons from H(2)O, generating O(2) and a proton gradient subsequently used for ATP formation. It consists of a core antenna complex that captures photons, and an electron transfer chain that converts photonic excitation into a charge separation. The polypeptide is Cytochrome b559 subunit alpha (Synechococcus sp. (strain CC9605)).